The sequence spans 53 residues: UPF0391 membrane protein TM1040_2720 (53 aa).

The next 2 membrane-spanning stretches (helical) occupy residues 4–24 (WALA…GGIA) and 29–48 (GIAQ…ALIL).

This sequence belongs to the UPF0391 family.

The protein resides in the cell membrane. This chain is UPF0391 membrane protein TM1040_2720, found in Ruegeria sp. (strain TM1040) (Silicibacter sp.).